We begin with the raw amino-acid sequence, 509 residues long: Lanosterol 14-alpha demethylase (509 aa).

A helical membrane pass occupies residues 30 to 50 (GNLLSMLLIACAFTLSLVYLF). Cys455 serves as a coordination point for heme.

This sequence belongs to the cytochrome P450 family. Requires heme as cofactor. Ubiquitinated by MARCHF6, leading to proteasomal degradation.

It localises to the endoplasmic reticulum membrane. The protein resides in the microsome membrane. It carries out the reaction a 14alpha-methyl steroid + 3 reduced [NADPH--hemoprotein reductase] + 3 O2 = a Delta(14) steroid + formate + 3 oxidized [NADPH--hemoprotein reductase] + 4 H2O + 4 H(+). The catalysed reaction is lanosterol + 3 reduced [NADPH--hemoprotein reductase] + 3 O2 = 4,4-dimethyl-5alpha-cholesta-8,14,24-trien-3beta-ol + formate + 3 oxidized [NADPH--hemoprotein reductase] + 4 H2O + 4 H(+). It catalyses the reaction 24,25-dihydrolanosterol + 3 reduced [NADPH--hemoprotein reductase] + 3 O2 = 4,4-dimethyl-8,14-cholestadien-3beta-ol + formate + 3 oxidized [NADPH--hemoprotein reductase] + 4 H2O + 4 H(+). The enzyme catalyses a 14alpha-methyl steroid + reduced [NADPH--hemoprotein reductase] + O2 = a 14alpha-hydroxymethyl steroid + oxidized [NADPH--hemoprotein reductase] + H2O + H(+). It carries out the reaction a 14alpha-hydroxymethyl steroid + reduced [NADPH--hemoprotein reductase] + O2 = a 14alpha-formyl steroid + oxidized [NADPH--hemoprotein reductase] + 2 H2O + H(+). The catalysed reaction is a 14alpha-formyl steroid + reduced [NADPH--hemoprotein reductase] + O2 = a Delta(14) steroid + formate + oxidized [NADPH--hemoprotein reductase] + H2O + 2 H(+). It catalyses the reaction lanosterol + reduced [NADPH--hemoprotein reductase] + O2 = 32-hydroxylanosterol + oxidized [NADPH--hemoprotein reductase] + H2O + H(+). The enzyme catalyses 32-hydroxylanosterol + reduced [NADPH--hemoprotein reductase] + O2 = 32-oxolanosterol + oxidized [NADPH--hemoprotein reductase] + 2 H2O + H(+). It carries out the reaction 32-oxolanosterol + reduced [NADPH--hemoprotein reductase] + O2 = 4,4-dimethyl-5alpha-cholesta-8,14,24-trien-3beta-ol + formate + oxidized [NADPH--hemoprotein reductase] + H2O + 2 H(+). The catalysed reaction is 24,25-dihydrolanosterol + reduced [NADPH--hemoprotein reductase] + O2 = 32-hydroxy-24,25-dihydrolanosterol + oxidized [NADPH--hemoprotein reductase] + H2O + H(+). It catalyses the reaction 32-hydroxy-24,25-dihydrolanosterol + reduced [NADPH--hemoprotein reductase] + O2 = 32-oxo-24,25-dihydrolanosterol + oxidized [NADPH--hemoprotein reductase] + 2 H2O + H(+). The enzyme catalyses 32-oxo-24,25-dihydrolanosterol + reduced [NADPH--hemoprotein reductase] + O2 = 4,4-dimethyl-8,14-cholestadien-3beta-ol + formate + oxidized [NADPH--hemoprotein reductase] + H2O + 2 H(+). The protein operates within steroid biosynthesis; zymosterol biosynthesis; zymosterol from lanosterol: step 1/6. Inhibited by azalanstat. Inhibited by azole antifungal agents ketoconazole, itraconazole and fluconazole. Its function is as follows. Sterol 14alpha-demethylase that plays a critical role in the cholesterol biosynthesis pathway, being cholesterol the major sterol component in mammalian membranes as well as a precursor for bile acid and steroid hormone synthesis. Cytochrome P450 monooxygenase that catalyzes the three-step oxidative removal of the 14alpha-methyl group (C-32) of sterols such as lanosterol (lanosta-8,24-dien-3beta-ol) and 24,25-dihydrolanosterol (DHL) in the form of formate, and converts the sterols to 4,4-dimethyl-5alpha-cholesta-8,14,24-trien-3beta-ol and 4,4-dimethyl-8,14-cholestadien-3beta-ol, respectively, which are intermediates of cholesterol biosynthesis. Can also demethylate substrates not intrinsic to mammals, such as eburicol (24-methylene-24,25-dihydrolanosterol), but at a lower rate than DHL. The protein is Lanosterol 14-alpha demethylase of Macaca fascicularis (Crab-eating macaque).